The primary structure comprises 94 residues: U1-theraphotoxin-Sp1a (94 aa).

An N-terminal signal peptide occupies residues 1 to 22 (MIFLLPSIISVMLLAEPVLMLG). Residues 23–58 (DTEDADLMEMVQLSRPFFNPIIRAVELVELREERQR) constitute a propeptide that is removed on maturation. 3 cysteine pairs are disulfide-bonded: C60–C78, C67–C83, and C77–C88. Residue V92 is modified to Valine amide.

The protein belongs to the neurotoxin 14 (magi-1) family. OAIP-1 subfamily. In terms of tissue distribution, expressed by the venom gland.

It is found in the secreted. Probable ion channel inhibitor. Shows insecticidal activity. Acts synergistically with the neonicotinoid insecticide imidacloprid. Is neither a repellent that repels insects nor an attractant that is preferentially consumed by insects. Is very stable. In Selenotypus plumipes (Australian featherleg tarantula), this protein is U1-theraphotoxin-Sp1a.